Consider the following 585-residue polypeptide: Parathyroid hormone/parathyroid hormone-related peptide receptor (585 aa).

Residues 1–26 (MGAARIAPGLALLLCCPVLSSAYALV) form the signal peptide. The Extracellular segment spans residues 27–184 (DADDVMTKEE…REREVFDRLG (158 aa)). 3 disulfide bridges follow: C48/C113, C104/C144, and C127/C166. Positions 66–100 (DKGWASAPTSGKPRKEKASGKLYPESGEDTGSRHQ) are disordered. 4 N-linked (GlcNAc...) asparagine glycosylation sites follow: N147, N157, N162, and N172. Residues 185-208 (MIYTVGYSVSLASLTVAVLILAYF) form a helical membrane-spanning segment. Topologically, residues 209–215 (RRLHCTR) are cytoplasmic. A helical membrane pass occupies residues 216–235 (NYIHMHLFLSFMLRAVSIFV). At 236 to 277 (KDAVLYSGATLDEAERLTEEELRAIAQAPLPPVAATSYVGCR) the chain is on the extracellular side. Residues 278 to 301 (VAVTFFLYFLATNYYWILVEGLYL) form a helical membrane-spanning segment. Topologically, residues 302-315 (HSLIFMAFFSEKKY) are cytoplasmic. A helical membrane pass occupies residues 316-337 (LWGFTVFGWGLPAIFVAVWVSV). The Extracellular portion of the chain corresponds to 338–356 (RATLANTGCWDLSSGNKKW). The chain crosses the membrane as a helical span at residues 357–377 (IIQVPILASIVLNFILFINIV). At 378–404 (RVLATKLRETNAGRCDTRQQYRKLLKS) the chain is on the cytoplasmic side. The chain crosses the membrane as a helical span at residues 405 to 423 (TLVLMPLFGVHYIVFMATP). Residues 424 to 435 (YTEVSGTLWQVQ) lie on the Extracellular side of the membrane. The helical transmembrane segment at 436-458 (MHYEMLFNSFQGFFVAIIYCFCN) threads the bilayer. Topologically, residues 459-585 (GEVQAEIKKS…LLQEEWETVM (127 aa)) are cytoplasmic. An Important for interaction with G proteins motif is present at residues 469–472 (WSRW). T543 carries the post-translational modification Phosphothreonine.

It belongs to the G-protein coupled receptor 2 family. In terms of assembly, homodimer in the absence of bound ligand. Peptide hormone binding leads to dissociation of the homodimer. Post-translationally, N-glycosylated.

It localises to the cell membrane. Its function is as follows. G-protein-coupled receptor for parathyroid hormone (PTH) and for parathyroid hormone-related peptide (PTHLH). Ligand binding causes a conformation change that triggers signaling via guanine nucleotide-binding proteins (G proteins) and modulates the activity of downstream effectors, such as adenylate cyclase (cAMP). PTH1R is coupled to G(s) G alpha proteins and mediates activation of adenylate cyclase activity. PTHLH dissociates from PTH1R more rapidly than PTH; as consequence, the cAMP response induced by PTHLH decays faster than the response induced by PTH. This is Parathyroid hormone/parathyroid hormone-related peptide receptor (PTH1R) from Sus scrofa (Pig).